The following is a 448-amino-acid chain: Glutamyl-tRNA reductase (448 aa).

Residues 48–51 (TCNR), S100, 105–107 (EDQ), and Q111 contribute to the substrate site. The active-site Nucleophile is C49. 180–185 (GAGEIG) lines the NADP(+) pocket.

It belongs to the glutamyl-tRNA reductase family. In terms of assembly, homodimer.

The catalysed reaction is (S)-4-amino-5-oxopentanoate + tRNA(Glu) + NADP(+) = L-glutamyl-tRNA(Glu) + NADPH + H(+). It functions in the pathway porphyrin-containing compound metabolism; protoporphyrin-IX biosynthesis; 5-aminolevulinate from L-glutamyl-tRNA(Glu): step 1/2. In terms of biological role, catalyzes the NADPH-dependent reduction of glutamyl-tRNA(Glu) to glutamate 1-semialdehyde (GSA). The polypeptide is Glutamyl-tRNA reductase (Methanosarcina mazei (strain ATCC BAA-159 / DSM 3647 / Goe1 / Go1 / JCM 11833 / OCM 88) (Methanosarcina frisia)).